A 161-amino-acid polypeptide reads, in one-letter code: Ribosomal RNA large subunit methyltransferase H (161 aa).

S-adenosyl-L-methionine-binding positions include leucine 78, glycine 110, and 129–134 (LGRMTF).

The protein belongs to the RNA methyltransferase RlmH family. In terms of assembly, homodimer.

The protein localises to the cytoplasm. It carries out the reaction pseudouridine(1915) in 23S rRNA + S-adenosyl-L-methionine = N(3)-methylpseudouridine(1915) in 23S rRNA + S-adenosyl-L-homocysteine + H(+). Specifically methylates the pseudouridine at position 1915 (m3Psi1915) in 23S rRNA. This Symbiobacterium thermophilum (strain DSM 24528 / JCM 14929 / IAM 14863 / T) protein is Ribosomal RNA large subunit methyltransferase H.